The chain runs to 64 residues: Large ribosomal subunit protein bL35 (64 aa).

It belongs to the bacterial ribosomal protein bL35 family.

In Coxiella burnetii (strain RSA 331 / Henzerling II), this protein is Large ribosomal subunit protein bL35.